The chain runs to 404 residues: Cytochrome b561 and DOMON domain-containing protein At5g35735 (404 aa).

The N-terminal stretch at 1-25 is a signal peptide; sequence MDRTQSPKTALFAVLATLLVLTVNG. One can recognise a DOMON domain in the interval 49–164; the sequence is LGSFLHWTYN…ITANQLWQVG (116 aa). Residues 170–369 form the Cytochrome b561 domain; it reads VPASHQTSGD…LEPLTWFIVL (200 aa). The segment at 172–207 is disordered; the sequence is ASHQTSGDNMRSSGRIDFRTGQASAGGGGSGDRLRK. A compositionally biased stretch (polar residues) spans 173–183; sequence SHQTSGDNMRS. Transmembrane regions (helical) follow at residues 210–230 and 241–261; these read THGVLNAVSWGVLMPMGAMMA and WFYLHIAFQVSGYVIGVAGWA. Residues histidine 211, histidine 245, and histidine 278 each contribute to the heme b site. Residues 280 to 300 form a helical membrane-spanning segment; that stretch reads NLGIALFTFATLQVFALLVRP. Histidine 314 provides a ligand contact to heme b. A run of 2 helical transmembrane segments spans residues 316-336 and 349-369; these read TVGYTTIILSIVNIFKGFDIL and ILIFLGACVLILEPLTWFIVL. The tract at residues 376-404 is disordered; the sequence is GNTVAAPTSSKYSNGVNGTTTTGPHHQDA. Positions 380–404 are enriched in polar residues; the sequence is AAPTSSKYSNGVNGTTTTGPHHQDA.

Heme b is required as a cofactor.

The protein resides in the membrane. In terms of biological role, may act as a catecholamine-responsive trans-membrane electron transporter. The sequence is that of Cytochrome b561 and DOMON domain-containing protein At5g35735 from Arabidopsis thaliana (Mouse-ear cress).